A 53-amino-acid polypeptide reads, in one-letter code: UPF0391 membrane protein ESA_03375 (53 aa).

The next 2 membrane-spanning stretches (helical) occupy residues 4-24 and 28-48; these read WGIIFLVIALIAAALGFGGLA and AGAAKIVFVVGIILFLVSLFM.

This sequence belongs to the UPF0391 family.

It is found in the cell membrane. This Cronobacter sakazakii (strain ATCC BAA-894) (Enterobacter sakazakii) protein is UPF0391 membrane protein ESA_03375.